Reading from the N-terminus, the 30-residue chain is Fibrinogen (30 aa).

In terms of assembly, homodimer. Secreted into the hemolymph.

It is found in the secreted. Its subcellular location is the extracellular space. Its function is as follows. Clotting protein. The protein is Fibrinogen of Panulirus interruptus (California spiny lobster).